The sequence spans 349 residues: C-X-C chemokine receptor type 1 (349 aa).

At 1 to 44 (MAEAEYFIWIAPEGDFEEEFGNITRMLPTGEYFSPCKRVPMTNR) the chain is on the extracellular side. The N-linked (GlcNAc...) asparagine glycan is linked to N22. Residues 45-71 (QAVVVFYALVFLLSLLGNSLVMLVILY) form a helical membrane-spanning segment. Over 72 to 80 (RRRTRSVTD) the chain is Cytoplasmic. A helical membrane pass occupies residues 81–101 (VYVLNLAIADLLFSLTLPFLA). The Extracellular segment spans residues 102-116 (VSKWKGWIFGTPLCK). Residues C115 and C192 are joined by a disulfide bond. Residues 117 to 138 (MVSLLKEVNFFSGILLLACISV) traverse the membrane as a helical segment. Residues 139–159 (DRYLAIVHATRTLTRKRYLVK) lie on the Cytoplasmic side of the membrane. Residues 160–179 (FVCMGTWGLSLVLSLPFAIF) traverse the membrane as a helical segment. At 180 to 204 (RQAYKPYRSGTVCYEVLGEATADLR) the chain is on the extracellular side. A helical membrane pass occupies residues 205 to 225 (ITLRGLSHIFGFLLPLFIMLV). The Cytoplasmic segment spans residues 226–247 (CYGLTLRTLFKAHMRQKRRAMW). The helical transmembrane segment at 248–269 (VIFAVVLVFLLCCLPYNLVLLS) threads the bilayer. The Extracellular portion of the chain corresponds to 270–290 (DTLLGAHLIQDTCERRNNIDQ). Residues 291-313 (ALYITEILGFSHSCLNPVIYAFV) traverse the membrane as a helical segment. The Cytoplasmic portion of the chain corresponds to 314-349 (GQSFRHEFLKILANLVHKEVLTHHSASFRTSLTTIY).

Belongs to the G-protein coupled receptor 1 family. Interacts with IL8. Interacts with GNAI2.

The protein localises to the cell membrane. In terms of biological role, receptor to interleukin-8, which is a powerful neutrophils chemotactic factor. Binding of IL-8 to the receptor causes activation of neutrophils. This response is mediated via a G-protein that activates a phosphatidylinositol-calcium second messenger system. The protein is C-X-C chemokine receptor type 1 (Cxcr1) of Rattus norvegicus (Rat).